The sequence spans 155 residues: Small ribosomal subunit protein uS7c (155 aa).

This sequence belongs to the universal ribosomal protein uS7 family. In terms of assembly, part of the 30S ribosomal subunit.

It is found in the plastid. It localises to the chloroplast. In terms of biological role, one of the primary rRNA binding proteins, it binds directly to 16S rRNA where it nucleates assembly of the head domain of the 30S subunit. The protein is Small ribosomal subunit protein uS7c (rps7) of Physcomitrium patens (Spreading-leaved earth moss).